We begin with the raw amino-acid sequence, 594 residues long: Glutamate decarboxylase 1 (594 aa).

Positions 1–13 (MASSTPSSSATSS) are enriched in low complexity. The tract at residues 1-23 (MASSTPSSSATSSNAGADPNTTN) is disordered. At serine 78 the chain carries Phosphoserine. 190–192 (QLS) provides a ligand contact to 4-aminobutanoate. The residue at position 405 (lysine 405) is an N6-(pyridoxal phosphate)lysine. Arginine 567 contributes to the 4-aminobutanoate binding site.

This sequence belongs to the group II decarboxylase family. Homodimer. The cofactor is pyridoxal 5'-phosphate.

The enzyme catalyses L-glutamate + H(+) = 4-aminobutanoate + CO2. In terms of biological role, catalyzes the synthesis of the inhibitory neurotransmitter gamma-aminobutyric acid (GABA) with pyridoxal 5'-phosphate as cofactor. This chain is Glutamate decarboxylase 1 (GAD1), found in Felis catus (Cat).